Here is a 139-residue protein sequence, read N- to C-terminus: Histone H2B (139 aa).

The span at 1–37 (MAPKSVASKAPASQASKAPAAASKAPAKAAKTSAAPK) shows a compositional bias: low complexity. Positions 1–48 (MAPKSVASKAPASQASKAPAAASKAPAKAAKTSAAPKDGAKKRSKKRV) are disordered. At lysine 9 the chain carries N6-acetyllysine; alternate. Lysine 9 participates in a covalent cross-link: Glycyl lysine isopeptide (Lys-Gly) (interchain with G-Cter in SUMO); alternate. Phosphoserine is present on serine 13. Residue lysine 17 is modified to N6-acetyllysine. Lysine 134 is covalently cross-linked (Glycyl lysine isopeptide (Lys-Gly) (interchain with G-Cter in ubiquitin)).

Belongs to the histone H2B family. As to quaternary structure, the nucleosome is a histone octamer containing two molecules each of H2A, H2B, H3 and H4 assembled in one H3-H4 heterotetramer and two H2A-H2B heterodimers. The octamer wraps approximately 147 bp of DNA. In terms of processing, monoubiquitinated by the UBC2-BRE1 complex to form H2BK123ub1. H2BK123ub1 gives a specific tag for epigenetic transcriptional activation and is also prerequisite for H3K4me and H3K79me formation. H2BK123ub1 also modulates the formation of double-strand breaks during meiosis and is a prerequisite for DNA-damage checkpoint activation. Post-translationally, phosphorylated to form H2BS10ph during progression through meiotic prophase. May be correlated with chromosome condensation. Acetylation of N-terminal lysines and particularly formation of H2BK11ac has a positive effect on transcription. In terms of processing, sumoylation to form H2BK6su occurs preferentially near the telomeres and represses gene transcription.

Its subcellular location is the nucleus. It is found in the chromosome. Its function is as follows. Core component of nucleosome. Nucleosomes wrap and compact DNA into chromatin, limiting DNA accessibility to the cellular machineries which require DNA as a template. Histones thereby play a central role in transcription regulation, DNA repair, DNA replication and chromosomal stability. DNA accessibility is regulated via a complex set of post-translational modifications of histones, also called histone code, and nucleosome remodeling. The polypeptide is Histone H2B (HTB1) (Cryptococcus neoformans var. neoformans serotype D (strain B-3501A) (Filobasidiella neoformans)).